The sequence spans 243 residues: Linker for activation of T-cells family member 2 (243 aa).

Over 1 to 5 (MSSGT) the chain is Extracellular. A helical; Signal-anchor for type III membrane protein membrane pass occupies residues 6–26 (ELLWPGAALLVLLGVAASLCV). S-palmitoyl cysteine attachment occurs at residues cysteine 25 and cysteine 28. At 27–243 (RCSRPGAKRS…VNGEVAATEA (217 aa)) the chain is on the cytoplasmic side. Serine 44 is modified (phosphoserine). The residue at position 58 (tyrosine 58) is a Phosphotyrosine. 2 positions are modified to phosphoserine: serine 59 and serine 92. Tyrosine 136, tyrosine 193, and tyrosine 233 each carry phosphotyrosine. A disordered region spans residues 174 to 243 (PTSGLCPSAS…VNGEVAATEA (70 aa)).

In terms of assembly, when phosphorylated, interacts with GRB2. May also interact with SOS1, GAB1 and CBL. Post-translationally, phosphorylated on tyrosines following cross-linking of BCR in B-cells, FCGR1 in myeloid cells, or FCER1 in mast cells; which induces the recruitment of GRB2. May be polyubiquitinated. Highly expressed in spleen, peripheral blood lymphocytes, and germinal centers of lymph nodes. Also expressed in placenta, lung, pancreas and small intestine. Present in B-cells, NK cells and monocytes. Absent from T-cells (at protein level).

The protein localises to the cell membrane. Involved in FCER1 (high affinity immunoglobulin epsilon receptor)-mediated signaling in mast cells. May also be involved in BCR (B-cell antigen receptor)-mediated signaling in B-cells and FCGR1 (high affinity immunoglobulin gamma Fc receptor I)-mediated signaling in myeloid cells. Couples activation of these receptors and their associated kinases with distal intracellular events through the recruitment of GRB2. The polypeptide is Linker for activation of T-cells family member 2 (LAT2) (Homo sapiens (Human)).